Reading from the N-terminus, the 1819-residue chain is Non-reducing polyketide synthase nscA (1819 aa).

The segment at 25-277 (RRLDQHSKDR…PLPVYDGLCH (253 aa)) is N-terminal acylcarrier protein transacylase domain (SAT). The 434-residue stretch at 413–846 (SSKLAIVGMA…GGNTTLLLED (434 aa)) folds into the Ketosynthase family 3 (KS3) domain. Residues cysteine 586, histidine 721, and histidine 764 each act as for beta-ketoacyl synthase activity in the active site. The segment at 952–1249 (FTSQGAYYHG…MIPSAPAMSS (298 aa)) is malonyl-CoA:ACP transacylase (MAT) domain. The segment at 1339–1658 (TSLVHQITAE…RLLMDRFFSP (320 aa)) is product template (PT) domain. An N-terminal hotdog fold region spans residues 1343–1479 (HQITAETVEA…AMIRFEDPMA (137 aa)). A PKS/mFAS DH domain is found at 1343–1653 (HQITAETVEA…IRRVPRLLMD (311 aa)). Histidine 1375 (proton acceptor; for dehydratase activity) is an active-site residue. Residues 1507-1653 (ASRLSKPLAY…IRRVPRLLMD (147 aa)) form a C-terminal hotdog fold region. The active-site Proton donor; for dehydratase activity is aspartate 1564. The segment at 1703–1742 (SSTMASKAPEPAPLLATSSESSTPKESPIVTPAESEREDP) is disordered. A compositionally biased stretch (low complexity) spans 1719-1730 (TSSESSTPKESP). The 78-residue stretch at 1742–1819 (PVDNNMISQC…EMTAWIEEYC (78 aa)) folds into the Carrier domain. At serine 1779 the chain carries O-(pantetheine 4'-phosphoryl)serine.

The cofactor is pantetheine 4'-phosphate.

It participates in secondary metabolite biosynthesis. Functionally, non-reducing polyketide synthase; part of the gene cluster that mediates the biosynthesis of neosartoricin B, a prenylated anthracenone that probably exhibits T-cell antiproliferative activity, suggestive of a physiological role as an immunosuppressive agent. The non-reducing polyketide synthase nscA probably synthesizes and cyclizes the decaketide backbone. The hydrolase nscB then mediates the product release through hydrolysis followed by spontaneous decarboxylation. The prenyltransferase nscD catalyzes the addition of the dimethylallyl group to the aromatic C5. The FAD-dependent monooxygenase nscC is then responsible for the stereospecific hydroxylation at C2. Neosartoricin B can be converted into two additional compounds neosartoricins C and D. Neosartoricin C is a spirocyclic compound that is cyclized through the attack of C3 hydroxyl on C14, followed by dehydration. On the other hand, neosartoricin D is a further cyclized compound in which attack of C2 on C14 in neosartoricin C results in the formation of the acetal-containing dioxabicyclo-octanone ring. Both of these compounds are novel and possibly represent related metabolites of the gene cluster. The sequence is that of Non-reducing polyketide synthase nscA from Trichophyton verrucosum (strain HKI 0517).